The sequence spans 284 residues: 2-dehydro-3-deoxyphosphooctonate aldolase (284 aa).

Belongs to the KdsA family.

The protein localises to the cytoplasm. The enzyme catalyses D-arabinose 5-phosphate + phosphoenolpyruvate + H2O = 3-deoxy-alpha-D-manno-2-octulosonate-8-phosphate + phosphate. It functions in the pathway carbohydrate biosynthesis; 3-deoxy-D-manno-octulosonate biosynthesis; 3-deoxy-D-manno-octulosonate from D-ribulose 5-phosphate: step 2/3. It participates in bacterial outer membrane biogenesis; lipopolysaccharide biosynthesis. This is 2-dehydro-3-deoxyphosphooctonate aldolase from Histophilus somni (strain 129Pt) (Haemophilus somnus).